Consider the following 161-residue polypeptide: MYRIGNGIDFHKLEINLNRPLILGGIECESEFALVGHSDADIILHAISDAILGALALGDIGQYFPDTDPSLKNIDSKIILVKCLELMKEKNFDLVNIDCTVIGERPKIAPLKDRITKSLSNLLNLPLDCISVKATTTEKMGALGRQEGIGTFCSILLEKRS.

Residues aspartate 9 and histidine 11 each contribute to the a divalent metal cation site. Residues 9–11 (DFH) and 37–38 (HS) each bind 4-CDP-2-C-methyl-D-erythritol 2-phosphate. An a divalent metal cation-binding site is contributed by histidine 45. 4-CDP-2-C-methyl-D-erythritol 2-phosphate-binding positions include 59-61 (DIG), 64-68 (FPDTD), 135-138 (TTTE), and arginine 145.

Belongs to the IspF family. Homotrimer. The cofactor is a divalent metal cation.

It carries out the reaction 4-CDP-2-C-methyl-D-erythritol 2-phosphate = 2-C-methyl-D-erythritol 2,4-cyclic diphosphate + CMP. Its pathway is isoprenoid biosynthesis; isopentenyl diphosphate biosynthesis via DXP pathway; isopentenyl diphosphate from 1-deoxy-D-xylulose 5-phosphate: step 4/6. Functionally, involved in the biosynthesis of isopentenyl diphosphate (IPP) and dimethylallyl diphosphate (DMAPP), two major building blocks of isoprenoid compounds. Catalyzes the conversion of 4-diphosphocytidyl-2-C-methyl-D-erythritol 2-phosphate (CDP-ME2P) to 2-C-methyl-D-erythritol 2,4-cyclodiphosphate (ME-CPP) with a corresponding release of cytidine 5-monophosphate (CMP). This chain is 2-C-methyl-D-erythritol 2,4-cyclodiphosphate synthase, found in Leptospira interrogans serogroup Icterohaemorrhagiae serovar copenhageni (strain Fiocruz L1-130).